Consider the following 1571-residue polypeptide: Phosphatidylinositol 3-kinase 1 (1571 aa).

Positions 1 to 73 are enriched in low complexity; the sequence is MNSIESSSND…NNDNNNNNNN (73 aa). Disordered stretches follow at residues 1–119, 157–195, and 283–430; these read MNSI…HVNN, GYDV…RTRN, and NSKL…IIKR. The segment covering 74 to 85 has biased composition (basic and acidic residues); sequence IDKKRKDSKNKQ. The span at 101–119 shows a compositional bias: low complexity; that stretch reads NSNDSNCSSGSSSGGHVNN. Residues 283-292 are compositionally biased toward basic and acidic residues; that stretch reads NSKLDTEEKP. Low complexity predominate over residues 294 to 324; that stretch reads TTTTTTTTTSTSISTSTPTTTTTTTTNTSTT. A compositionally biased stretch (polar residues) spans 325–337; the sequence is NDITIKPKTSPTK. Composition is skewed to low complexity over residues 360-382 and 405-424; these read KVST…PTGK and NNTN…NNNN. The 98-residue stretch at 530–627 folds into the PI3K-ABD domain; it reads IKTSFNILFL…IPKLKVIEKS (98 aa). The PI3K-RBD domain occupies 700-789; it reads GNKILISIFL…GTKPQLTLIQ (90 aa). The C2 PI3K-type domain maps to 851-1020; sequence IKKPFRVKVM…GLTLEFEEFN (170 aa). The PIK helical domain occupies 1040 to 1216; it reads QPPTNINSNE…GILLESYLYA (177 aa). The 279-residue stretch at 1280–1558 folds into the PI3K/PI4K catalytic domain; it reads IINKSKYMDS…LIHESLATKT (279 aa). Positions 1286 to 1292 are G-loop; that stretch reads YMDSKKL. Positions 1424–1432 are catalytic loop; that stretch reads GIGDRHNDN. The segment at 1443 to 1469 is activation loop; it reads HIDFGHFLGNYKKKFGFKRERAPFVFT.

This sequence belongs to the PI3/PI4-kinase family.

It carries out the reaction a 1,2-diacyl-sn-glycero-3-phospho-(1D-myo-inositol) + ATP = a 1,2-diacyl-sn-glycero-3-phospho-(1D-myo-inositol-3-phosphate) + ADP + H(+). The protein is Phosphatidylinositol 3-kinase 1 (pikA) of Dictyostelium discoideum (Social amoeba).